A 304-amino-acid chain; its full sequence is Nucleotide-binding protein KRH_12070 (304 aa).

Position 27 to 34 (27 to 34 (GMSGAGRS)) interacts with ATP. GTP is bound at residue 78 to 81 (DVRG).

This sequence belongs to the RapZ-like family.

Its function is as follows. Displays ATPase and GTPase activities. This is Nucleotide-binding protein KRH_12070 from Kocuria rhizophila (strain ATCC 9341 / DSM 348 / NBRC 103217 / DC2201).